Reading from the N-terminus, the 318-residue chain is NADH-ubiquinone oxidoreductase chain 1 (318 aa).

8 consecutive transmembrane segments (helical) span residues 2-22 (FMIN…FLTL), 70-90 (MFII…IPLP), 100-120 (LGIL…LWSG), 147-167 (AIIL…TLII), 171-191 (YLWL…STLA), 217-237 (AGPF…MNIF), 254-276 (LYSI…IRAS), and 294-314 (LPLT…LSSI).

The protein belongs to the complex I subunit 1 family. Core subunit of respiratory chain NADH dehydrogenase (Complex I) which is composed of 45 different subunits.

It is found in the mitochondrion inner membrane. It catalyses the reaction a ubiquinone + NADH + 5 H(+)(in) = a ubiquinol + NAD(+) + 4 H(+)(out). In terms of biological role, core subunit of the mitochondrial membrane respiratory chain NADH dehydrogenase (Complex I) which catalyzes electron transfer from NADH through the respiratory chain, using ubiquinone as an electron acceptor. Essential for the catalytic activity and assembly of complex I. This Equus asinus (Donkey) protein is NADH-ubiquinone oxidoreductase chain 1 (MT-ND1).